Here is a 175-residue protein sequence, read N- to C-terminus: Regenerating islet-derived protein 3-gamma (175 aa).

The N-terminal stretch at 1-26 is a signal peptide; sequence MLPPMALPSVSWMLLSCLILLCQVQG. A propeptide spanning residues 27–37 is cleaved from the precursor; that stretch reads EETQKELPSPR. 3 disulfides stabilise this stretch: C40-C51, C68-C171, and C146-C163. The C-type lectin domain occupies 47–172; sequence YGSPCYALFL…CDAKLPYVCK (126 aa). The tract at residues 103 to 118 is sufficient to activate EXTL3; the sequence is WIGLHDPTQGSEPDGD. H107 lines the Zn(2+) pocket. The EPN signature appears at 114–116; that stretch reads EPD. 2 residues coordinate Zn(2+): E121 and H145.

As to quaternary structure, forms a hexameric membrane-permeabilizing oligomeric pore on membrane phospholipids. The hexamer is formed by three dimers related by helical symmetry. Forms filaments, filamentation traps pore complexes and limits damage to host cells. Interacts with EXTL3. Proteolytic processing by trypsin removes an inhibitory N-terminal propeptide and is essential for peptidoglycan binding and antibacterial activity. Predominantly expressed in pancreas, where it may be restricted to exocrine pancreas. Moderate expression levels in testis and weak in heart, kidney and placenta.

The protein localises to the secreted. Its subcellular location is the cytoplasm. Lipopolysaccharide inhibits pore-forming activity, explaining why is bactericidal for Gram-positive but not Gram-negative bacteria. Its function is as follows. Bactericidal C-type lectin which acts exclusively against Gram-positive bacteria and mediates bacterial killing by binding to surface-exposed carbohydrate moieties of peptidoglycan. Restricts bacterial colonization of the intestinal epithelial surface and consequently limits activation of adaptive immune responses by the microbiota. Functionally, acts as a hormone in response to different stimuli like anti-inflammatory signals, such as IL17A, or gut microbiome. Is secreted by different cell types to activate its receptor EXTL3 and induce cell specific signaling pathways. Induced by IL17A in keratinocytes, regulates keratinocyte proliferation and differentiation after skin injury. In parallel, inhibits skin inflammation through the inhibition of inflammatory cytokines such as IL6 and TNF. Induced by IL22 in lung epithelial cells, inhibits cytokine production and regulates allergic airway inflammation. Induced in small intestine by inulin-enriched diet and Lactobacillus gasseri enriched microbiome, plays a role in the improvement of gut barrier function, the regulation of energy balance and glucose levels. Modulates microbiota composition in duodenal contents. Produced by nociceptor in response to endotoxins, prevents endotoxic death by targeting kynurenine pathway in microglia. Has bacteriostatic activity. In terms of biological role, has bactericidal activity against L.monocytogenes and methicillin-resistant S.aureus. This chain is Regenerating islet-derived protein 3-gamma, found in Homo sapiens (Human).